A 261-amino-acid polypeptide reads, in one-letter code: Uridine-cytidine kinase 2 (261 aa).

Over residues 1-16 (MAGDSEQTLQNHQQPN) the composition is skewed to polar residues. A disordered region spans residues 1 to 24 (MAGDSEQTLQNHQQPNGGEPFLIG). Alanine 2 carries the N-acetylalanine modification. Position 27–35 (27–35 (GGTASGKSS)) interacts with ATP. Residues aspartate 84, tyrosine 112, histidine 117, arginine 166, arginine 176, and glutamine 184 each coordinate substrate. ATP is bound at residue aspartate 213. The disordered stretch occupies residues 236–261 (RQTNGCLNGYTPSRKRQASESSSRPH). Serine 254 is subject to Phosphoserine.

The protein belongs to the uridine kinase family. As to quaternary structure, homotetramer. As to expression, according to PubMed:8812458; testis-specific. According to PubMed:11306702, placenta-specific.

The enzyme catalyses uridine + ATP = UMP + ADP + H(+). It carries out the reaction cytidine + ATP = CMP + ADP + H(+). Its pathway is pyrimidine metabolism; CTP biosynthesis via salvage pathway; CTP from cytidine: step 1/3. It participates in pyrimidine metabolism; UMP biosynthesis via salvage pathway; UMP from uridine: step 1/1. Phosphorylates uridine and cytidine to uridine monophosphate and cytidine monophosphate. Does not phosphorylate deoxyribonucleosides or purine ribonucleosides. Can use ATP or GTP as a phosphate donor. Can also phosphorylate cytidine and uridine nucleoside analogs such as 6-azauridine, 5-fluorouridine, 4-thiouridine, 5-bromouridine, N(4)-acetylcytidine, N(4)-benzoylcytidine, 5-fluorocytidine, 2-thiocytidine, 5-methylcytidine, and N(4)-anisoylcytidine. The chain is Uridine-cytidine kinase 2 (UCK2) from Homo sapiens (Human).